The primary structure comprises 423 residues: Dihydroorotase-like protein (423 aa).

It belongs to the metallo-dependent hydrolases superfamily. DHOase family. PyrC' subfamily. Heterododecamer of 6 active PyrB subunits and 6 non-catalytic PyrC' subunits.

Functionally, non-functional DHOase. The chain is Dihydroorotase-like protein (pyrC') from Pseudomonas aeruginosa (strain ATCC 15692 / DSM 22644 / CIP 104116 / JCM 14847 / LMG 12228 / 1C / PRS 101 / PAO1).